The primary structure comprises 468 residues: UDP-glycosyltransferase 89B2 (468 aa).

UDP-alpha-D-glucose is bound by residues S287, 347–348 (WV), 365–373 (HCGWNSVME), and 387–390 (SADQ).

This sequence belongs to the UDP-glycosyltransferase family.

Functionally, may glycosylate diterpenes or flavonols in leaves. The polypeptide is UDP-glycosyltransferase 89B2 (Stevia rebaudiana (Stevia)).